The sequence spans 258 residues: Hydroxypyruvate isomerase (258 aa).

Active-site proton donor/acceptor residues include Glu143 and Glu240.

It belongs to the hyi family. Homodimer.

The enzyme catalyses 3-hydroxypyruvate = 2-hydroxy-3-oxopropanoate. Not stimulated by addition of pyridoxal 5'-phosphate (0.1 mM), FAD, NAD(+), NADP(+) or ATP (1 mM each). EDTA (10 mM) and metal ions (1 mM) such as Ca(2+), Co(2+), Mg(2+), Ni(2+), Zn(2+) do not affect the enzyme activity. In terms of biological role, catalyzes the reversible isomerization between hydroxypyruvate and 2-hydroxy-3-oxopropanoate (also termed tartronate semialdehyde). Does not catalyze the isomerization of D-fructose to D-glucose or that of D-xylulose to D-xylose. Also does not catalyze racemization of serine, alanine, glycerate or lactate. The polypeptide is Hydroxypyruvate isomerase (hyi) (Escherichia coli (strain K12)).